A 1870-amino-acid polypeptide reads, in one-letter code: Dedicator of cytokinesis protein 5 (1870 aa).

One can recognise an SH3 domain in the interval 8–69 (KRQKYGVAIY…PETYIHLKEA (62 aa)). The residue at position 365 (Ser365) is a Phosphoserine. The C2 DOCK-type domain maps to 443-627 (RNDIYVTLIH…DSFQIATLIC (185 aa)). At Lys818 the chain carries N6-acetyllysine. One can recognise a DOCKER domain in the interval 1231 to 1642 (YKEKKREDIY…VEKHYGVITL (412 aa)). Positions 1679-1702 (VVSTSSNSSDNAPSRPGSDGSILE) are disordered. Residues Ser1756, Ser1766, Ser1785, and Ser1789 each carry the phosphoserine modification. A disordered region spans residues 1772–1870 (NRLSPFHGSS…GIPTSEPGSQ (99 aa)). Residues 1784-1794 (QSTPLSPPPLT) are compositionally biased toward pro residues. At Thr1794 the chain carries Phosphothreonine. The segment covering 1797–1808 (ATRTLSSPSLQT) has biased composition (polar residues). Thr1814 is modified (phosphothreonine). Residues 1815-1824 (PVPPPPPPKS) are compositionally biased toward pro residues. Ser1834 and Ser1869 each carry phosphoserine.

Belongs to the DOCK family. Interacts with CRK and CRKL. Interacts (via N-terminus) with tensin TNS3 (via N-terminus); the interaction increases DOCK5 guanine nucleotide exchange activity towards Rac. Interacts with ELMO1.

It localises to the cytoplasm. Its subcellular location is the cell membrane. The protein resides in the cell projection. The protein localises to the podosome. Guanine nucleotide exchange factor (GEF) for Rho and Rac. GEF proteins activate small GTPases by exchanging bound GDP for free GTP. Along with DOCK1, mediates CRK/CRKL regulation of epithelial and endothelial cell spreading and migration on type IV collagen. The chain is Dedicator of cytokinesis protein 5 (DOCK5) from Homo sapiens (Human).